The sequence spans 312 residues: Zinc transporter ZitB (312 aa).

Transmembrane regions (helical) follow at residues 21 to 41, 48 to 68, 90 to 110, 123 to 143, and 164 to 184; these read LLFA…GGIL, LADA…LLVV, AAFV…WEAI, LMMV…WILH, and LLGS…GWTP.

The protein belongs to the cation diffusion facilitator (CDF) transporter (TC 2.A.4) family. SLC30A subfamily.

It localises to the cell inner membrane. Functionally, involved in zinc efflux across the cytoplasmic membrane, thus reducing zinc accumulation in the cytoplasm and rendering bacteria more resistant to zinc. It may contribute to zinc homeostasis at low concentrations of zinc. In Salmonella typhi, this protein is Zinc transporter ZitB.